The primary structure comprises 737 residues: Catalase-peroxidase (737 aa).

The disordered stretch occupies residues 1 to 33 (MPEATEHPPIGEAQTEPAQSGCPMVIKPPVEGG). The tryptophyl-tyrosyl-methioninium (Trp-Tyr) (with M-261) cross-link spans 107–235 (WHAAGTYRVQ…LGASHMGLIY (129 aa)). The active-site Proton acceptor is the His-108. Residues 235-261 (YVNPEGPEGNPDPIAAAIDIRETFGRM) constitute a cross-link (tryptophyl-tyrosyl-methioninium (Tyr-Met) (with W-107)). His-276 provides a ligand contact to heme.

Belongs to the peroxidase family. Peroxidase/catalase subfamily. As to quaternary structure, homodimer or homotetramer. Heme b is required as a cofactor. In terms of processing, formation of the three residue Trp-Tyr-Met cross-link is important for the catalase, but not the peroxidase activity of the enzyme.

It catalyses the reaction H2O2 + AH2 = A + 2 H2O. The catalysed reaction is 2 H2O2 = O2 + 2 H2O. Functionally, bifunctional enzyme with both catalase and broad-spectrum peroxidase activity. May play a role in polycyclic aromatic hydrocarbon (PAH) metabolism. This is Catalase-peroxidase from Mycolicibacterium vanbaalenii (Mycobacterium vanbaalenii).